The primary structure comprises 103 residues: Small ribosomal subunit protein uS10 (103 aa).

The protein belongs to the universal ribosomal protein uS10 family. As to quaternary structure, part of the 30S ribosomal subunit.

Involved in the binding of tRNA to the ribosomes. This Neorickettsia sennetsu (strain ATCC VR-367 / Miyayama) (Ehrlichia sennetsu) protein is Small ribosomal subunit protein uS10.